The chain runs to 59 residues: MAKLEITLKRSLIGRPQPQRKTVQALGLGKTNSVVVKEDNPAIRGMITKVSHLVDVKEV.

The protein belongs to the universal ribosomal protein uL30 family. As to quaternary structure, part of the 50S ribosomal subunit.

The polypeptide is Large ribosomal subunit protein uL30 (Listeria innocua serovar 6a (strain ATCC BAA-680 / CLIP 11262)).